The chain runs to 940 residues: Alanine--tRNA ligase (940 aa).

4 residues coordinate Zn(2+): His581, His585, Cys683, and His687.

The protein belongs to the class-II aminoacyl-tRNA synthetase family. Requires Zn(2+) as cofactor.

It localises to the cytoplasm. The catalysed reaction is tRNA(Ala) + L-alanine + ATP = L-alanyl-tRNA(Ala) + AMP + diphosphate. Functionally, catalyzes the attachment of alanine to tRNA(Ala) in a two-step reaction: alanine is first activated by ATP to form Ala-AMP and then transferred to the acceptor end of tRNA(Ala). Also edits incorrectly charged Ser-tRNA(Ala) and Gly-tRNA(Ala) via its editing domain. The protein is Alanine--tRNA ligase of Leptospira borgpetersenii serovar Hardjo-bovis (strain L550).